A 340-amino-acid polypeptide reads, in one-letter code: Glyceraldehyde-3-phosphate dehydrogenase, cytosolic (340 aa).

NAD(+) contacts are provided by residues 16–17, Asp38, and Arg85; that span reads RI. D-glyceraldehyde 3-phosphate contacts are provided by residues 156–158, Thr187, 216–217, and Arg239; these read SCT and TG. Residue Cys157 is the Nucleophile of the active site. Asn321 is an NAD(+) binding site.

It belongs to the glyceraldehyde-3-phosphate dehydrogenase family. As to quaternary structure, homotetramer.

The protein resides in the cytoplasm. It carries out the reaction D-glyceraldehyde 3-phosphate + phosphate + NAD(+) = (2R)-3-phospho-glyceroyl phosphate + NADH + H(+). The protein operates within carbohydrate degradation; glycolysis; pyruvate from D-glyceraldehyde 3-phosphate: step 1/5. Its function is as follows. Key enzyme in glycolysis that catalyzes the first step of the pathway by converting D-glyceraldehyde 3-phosphate (G3P) into 3-phospho-D-glyceroyl phosphate. Essential for the maintenance of cellular ATP levels and carbohydrate metabolism. The protein is Glyceraldehyde-3-phosphate dehydrogenase, cytosolic of Taxus baccata (English yew).